We begin with the raw amino-acid sequence, 237 residues long: Phosphoglycolate phosphatase (237 aa).

Aspartate 15 (nucleophile) is an active-site residue. Positions 15, 17, and 177 each coordinate Mg(2+).

The protein belongs to the HAD-like hydrolase superfamily. CbbY/CbbZ/Gph/YieH family. It depends on Mg(2+) as a cofactor.

It catalyses the reaction 2-phosphoglycolate + H2O = glycolate + phosphate. The protein operates within organic acid metabolism; glycolate biosynthesis; glycolate from 2-phosphoglycolate: step 1/1. Functionally, specifically catalyzes the dephosphorylation of 2-phosphoglycolate. Is involved in the dissimilation of the intracellular 2-phosphoglycolate formed during the DNA repair of 3'-phosphoglycolate ends, a major class of DNA lesions induced by oxidative stress. The protein is Phosphoglycolate phosphatase of Caulobacter vibrioides (strain ATCC 19089 / CIP 103742 / CB 15) (Caulobacter crescentus).